A 339-amino-acid chain; its full sequence is Nucleoid-associated protein Asuc_0779 (339 aa).

Belongs to the YejK family.

The protein localises to the cytoplasm. It is found in the nucleoid. This chain is Nucleoid-associated protein Asuc_0779, found in Actinobacillus succinogenes (strain ATCC 55618 / DSM 22257 / CCUG 43843 / 130Z).